Here is a 155-residue protein sequence, read N- to C-terminus: Ribosome maturation factor RimP (155 aa).

It belongs to the RimP family.

Its subcellular location is the cytoplasm. Its function is as follows. Required for maturation of 30S ribosomal subunits. The chain is Ribosome maturation factor RimP from Listeria innocua serovar 6a (strain ATCC BAA-680 / CLIP 11262).